A 1071-amino-acid polypeptide reads, in one-letter code: DNA-directed RNA polymerase subunit beta (1071 aa).

The protein belongs to the RNA polymerase beta chain family. In terms of assembly, in plastids the minimal PEP RNA polymerase catalytic core is composed of four subunits: alpha, beta, beta', and beta''. When a (nuclear-encoded) sigma factor is associated with the core the holoenzyme is formed, which can initiate transcription.

The protein localises to the plastid. It localises to the chloroplast. The enzyme catalyses RNA(n) + a ribonucleoside 5'-triphosphate = RNA(n+1) + diphosphate. Its function is as follows. DNA-dependent RNA polymerase catalyzes the transcription of DNA into RNA using the four ribonucleoside triphosphates as substrates. In Adiantum capillus-veneris (Maidenhair fern), this protein is DNA-directed RNA polymerase subunit beta.